We begin with the raw amino-acid sequence, 298 residues long: MSAQNPLFSGSIVALVTPMNHYGEVDFSCLEKLVEHHIEAGSNALVSVGTTGESATLSIEENVKVIEKTVEFAKGRIPIIAGAGANATSEAITMTKLLRDSGVAGCLSVVPYYNKPTQEGIYQHFKAIAECTNLPQILYNVPSRTGSDMKPETVARLAKIENIVGIKEATGDVSRIVKIKQLAGKNFIVLSGDDATGLEAIKLGAEGVISVTNNIAAKDMADMYRYALVGDFDKAEEINARLMRLHHDLFIESNPIPVKWAAYRLGLIKSSHLRLPLTTLSEEIQPKVEDALKIAGLL.

Threonine 51 lines the pyruvate pocket. The active-site Proton donor/acceptor is the tyrosine 139. Lysine 167 functions as the Schiff-base intermediate with substrate in the catalytic mechanism. Isoleucine 209 contributes to the pyruvate binding site.

The protein belongs to the DapA family. In terms of assembly, homotetramer; dimer of dimers.

The protein localises to the cytoplasm. It catalyses the reaction L-aspartate 4-semialdehyde + pyruvate = (2S,4S)-4-hydroxy-2,3,4,5-tetrahydrodipicolinate + H2O + H(+). It functions in the pathway amino-acid biosynthesis; L-lysine biosynthesis via DAP pathway; (S)-tetrahydrodipicolinate from L-aspartate: step 3/4. Its function is as follows. Catalyzes the condensation of (S)-aspartate-beta-semialdehyde [(S)-ASA] and pyruvate to 4-hydroxy-tetrahydrodipicolinate (HTPA). In Haemophilus influenzae (strain PittEE), this protein is 4-hydroxy-tetrahydrodipicolinate synthase.